A 171-amino-acid chain; its full sequence is MNLQQQLAYCQQHQQRLQLRHFDNETAWQLGEKIKRQAEKQGVALAIDITVNHQTLFSYAMAGTCAENQDWLRRKRNVVELLSTSSYAAGLMLQQRETSLDARYGVSLRDYAALGGAFPLQIKQAGIIGSVNVSGAPHLDDHNLLLQVLADFIGLPIGSIELLTPLTPLSA.

It belongs to the UPF0303 family.

The protein is UPF0303 protein YPK_1581 of Yersinia pseudotuberculosis serotype O:3 (strain YPIII).